The primary structure comprises 231 residues: Large ribosomal subunit protein uL1 (231 aa).

It belongs to the universal ribosomal protein uL1 family. As to quaternary structure, part of the 50S ribosomal subunit.

Functionally, binds directly to 23S rRNA. The L1 stalk is quite mobile in the ribosome, and is involved in E site tRNA release. Its function is as follows. Protein L1 is also a translational repressor protein, it controls the translation of the L11 operon by binding to its mRNA. The protein is Large ribosomal subunit protein uL1 of Neisseria meningitidis serogroup A / serotype 4A (strain DSM 15465 / Z2491).